Consider the following 505-residue polypeptide: Maturase K (505 aa).

This sequence belongs to the intron maturase 2 family. MatK subfamily.

The protein resides in the plastid. The protein localises to the chloroplast. Usually encoded in the trnK tRNA gene intron. Probably assists in splicing its own and other chloroplast group II introns. This is Maturase K from Physcomitrium patens (Spreading-leaved earth moss).